Consider the following 512-residue polypeptide: Bifunctional purine biosynthesis protein PurH (512 aa).

The MGS-like domain occupies Met-1–Val-144.

This sequence belongs to the PurH family.

The enzyme catalyses (6R)-10-formyltetrahydrofolate + 5-amino-1-(5-phospho-beta-D-ribosyl)imidazole-4-carboxamide = 5-formamido-1-(5-phospho-D-ribosyl)imidazole-4-carboxamide + (6S)-5,6,7,8-tetrahydrofolate. It carries out the reaction IMP + H2O = 5-formamido-1-(5-phospho-D-ribosyl)imidazole-4-carboxamide. The protein operates within purine metabolism; IMP biosynthesis via de novo pathway; 5-formamido-1-(5-phospho-D-ribosyl)imidazole-4-carboxamide from 5-amino-1-(5-phospho-D-ribosyl)imidazole-4-carboxamide (10-formyl THF route): step 1/1. Its pathway is purine metabolism; IMP biosynthesis via de novo pathway; IMP from 5-formamido-1-(5-phospho-D-ribosyl)imidazole-4-carboxamide: step 1/1. In Ligilactobacillus salivarius (strain UCC118) (Lactobacillus salivarius), this protein is Bifunctional purine biosynthesis protein PurH.